The following is a 335-amino-acid chain: Cathepsin B (335 aa).

The signal sequence occupies residues 1 to 19 (MWQLLATLSCLLVLTSARS). Positions 20–79 (SLHFPPLSDEMVNYVNKQNTTWKAGHNFYNVDLSYVKKLCGAILGGPKLPQRDAFAADMV) are cleaved as a propeptide — activation peptide. Cystine bridges form between C93–C122, C105–C150, C141–C207, C142–C146, C179–C211, and C187–C198. The active site involves C108. Residue N192 is glycosylated (N-linked (GlcNAc...) asparagine). At K220 the chain carries N6-acetyllysine. Residues H278 and N298 contribute to the active site. Positions 333–335 (HQH) are excised as a propeptide.

It belongs to the peptidase C1 family. Dimer of a heavy chain and a light chain cross-linked by a disulfide bond. Interacts with SRPX2. Directly interacts with SHKBP1.

Its subcellular location is the lysosome. It localises to the melanosome. It is found in the secreted. The protein localises to the extracellular space. The protein resides in the apical cell membrane. It carries out the reaction Hydrolysis of proteins with broad specificity for peptide bonds. Preferentially cleaves -Arg-Arg-|-Xaa bonds in small molecule substrates (thus differing from cathepsin L). In addition to being an endopeptidase, shows peptidyl-dipeptidase activity, liberating C-terminal dipeptides.. Its function is as follows. Thiol protease which is believed to participate in intracellular degradation and turnover of proteins. Cleaves matrix extracellular phosphoglycoprotein MEPE. Involved in the solubilization of cross-linked TG/thyroglobulin in the thyroid follicle lumen. Has also been implicated in tumor invasion and metastasis. This chain is Cathepsin B (CTSB), found in Ovis aries (Sheep).